The sequence spans 477 residues: Protein RdxB (477 aa).

Residues 1–29 (MTSPDTQTSSLYAKREPVFPKRVSGKFRS) are Cytoplasmic-facing. The chain crosses the membrane as a helical span at residues 30–50 (LKWWIMGVTLGIYYIAPWLRW). Residues 51 to 81 (DRGPNLPDQAILVDLANRRFFFFMIEIWPHE) are Periplasmic-facing. A helical transmembrane segment spans residues 82-102 (FYFVAGLLIMAGLGLFLFTSA). At 103–154 (AGRVWCGYACPQTVWTDLFILVERWVEGDRNARIRLLRQRWDLEKTRKYLTK) the chain is on the cytoplasmic side. Residues 155-175 (WTLWLLIGLATGGAWVFYFTD) traverse the membrane as a helical segment. Residues 176–189 (APTLLVDLLTGNAH) are Periplasmic-facing. Residues 190–210 (PVAYITMATLTATTFAFGGFA) form a helical membrane-spanning segment. The Cytoplasmic portion of the chain corresponds to 211–338 (REQICIYACP…SAWRHVFRLR (128 aa)). One can recognise a 4Fe-4S ferredoxin-type domain in the interval 253-281 (EPLSPDQGDCIDCMACVNVCPMGIDIRDG). [4Fe-4S] cluster-binding residues include cysteine 262, cysteine 265, cysteine 268, cysteine 272, cysteine 286, cysteine 289, cysteine 292, and cysteine 296. The chain crosses the membrane as a helical span at residues 339-359 (TLIYTALWSGVGLALIVALFL). Topologically, residues 360 to 477 (RSPIDINVTP…HDTIFNGRGN (118 aa)) are periplasmic.

It depends on [4Fe-4S] cluster as a cofactor.

It is found in the cell membrane. Its function is as follows. Involved in a membrane generated redox signal; required to maintain repression of photosynthesis gene expression in the presence of oxygen. The chain is Protein RdxB (rdxB) from Cereibacter sphaeroides (strain ATCC 17023 / DSM 158 / JCM 6121 / CCUG 31486 / LMG 2827 / NBRC 12203 / NCIMB 8253 / ATH 2.4.1.) (Rhodobacter sphaeroides).